A 179-amino-acid chain; its full sequence is Adenine phosphoribosyltransferase (179 aa).

This sequence belongs to the purine/pyrimidine phosphoribosyltransferase family. In terms of assembly, homodimer.

Its subcellular location is the cytoplasm. The enzyme catalyses AMP + diphosphate = 5-phospho-alpha-D-ribose 1-diphosphate + adenine. The protein operates within purine metabolism; AMP biosynthesis via salvage pathway; AMP from adenine: step 1/1. In terms of biological role, catalyzes a salvage reaction resulting in the formation of AMP, that is energically less costly than de novo synthesis. The sequence is that of Adenine phosphoribosyltransferase from Helicobacter acinonychis (strain Sheeba).